Here is a 257-residue protein sequence, read N- to C-terminus: Putative hydro-lyase YcsI (257 aa).

It belongs to the D-glutamate cyclase family.

The polypeptide is Putative hydro-lyase YcsI (ycsI) (Bacillus subtilis (strain 168)).